The primary structure comprises 772 residues: Probable beta-glucosidase M (772 aa).

Residues 1-20 form the signal peptide; sequence MLTSWGKTGFVLALALGGRA. Asn-259 carries an N-linked (GlcNAc...) asparagine glycan. Residue Asp-287 is part of the active site. 7 N-linked (GlcNAc...) asparagine glycosylation sites follow: Asn-315, Asn-322, Asn-438, Asn-523, Asn-547, Asn-574, and Asn-586.

It belongs to the glycosyl hydrolase 3 family.

It localises to the secreted. It catalyses the reaction Hydrolysis of terminal, non-reducing beta-D-glucosyl residues with release of beta-D-glucose.. Its pathway is glycan metabolism; cellulose degradation. Beta-glucosidases are one of a number of cellulolytic enzymes involved in the degradation of cellulosic biomass. Catalyzes the last step releasing glucose from the inhibitory cellobiose. This is Probable beta-glucosidase M (bglM) from Emericella nidulans (strain FGSC A4 / ATCC 38163 / CBS 112.46 / NRRL 194 / M139) (Aspergillus nidulans).